A 177-amino-acid chain; its full sequence is ATP-dependent protease subunit HslV (177 aa).

The active site involves T2. Residues A159, D162, and T165 each contribute to the Na(+) site.

It belongs to the peptidase T1B family. HslV subfamily. As to quaternary structure, a double ring-shaped homohexamer of HslV is capped on each side by a ring-shaped HslU homohexamer. The assembly of the HslU/HslV complex is dependent on binding of ATP.

It localises to the cytoplasm. It catalyses the reaction ATP-dependent cleavage of peptide bonds with broad specificity.. With respect to regulation, allosterically activated by HslU binding. Its function is as follows. Protease subunit of a proteasome-like degradation complex believed to be a general protein degrading machinery. This is ATP-dependent protease subunit HslV from Lactobacillus leichmannii.